We begin with the raw amino-acid sequence, 363 residues long: Endopolygalacturonase A (363 aa).

The N-terminal stretch at 1-20 is a signal peptide; that stretch reads MQLLQSSVIAATVGAALVAA. Residues 21–28 constitute a propeptide that is removed on maturation; sequence VPVELEAR. A disulfide bond links Cys-31 and Cys-46. 6 PbH1 repeats span residues 158-187, 188-209, 210-230, 239-260, 268-290, and 302-347; these read SDNL…DVGS, STYI…AINS, GSHI…SIGS, VEDV…RIKT, VSNV…IVEQ, and TNGI…SITG. An N-linked (GlcNAc...) asparagine glycan is attached at Asn-162. Asp-202 functions as the Proton donor in the catalytic mechanism. A disulfide bridge links Cys-204 with Cys-220. His-224 is a catalytic residue. 2 disulfides stabilise this stretch: Cys-330-Cys-335 and Cys-354-Cys-363.

This sequence belongs to the glycosyl hydrolase 28 family.

The protein localises to the secreted. The enzyme catalyses (1,4-alpha-D-galacturonosyl)n+m + H2O = (1,4-alpha-D-galacturonosyl)n + (1,4-alpha-D-galacturonosyl)m.. In terms of biological role, involved in maceration and soft-rotting of plant tissue. Hydrolyzes the 1,4-alpha glycosidic bonds of de-esterified pectate in the smooth region of the plant cell wall. The chain is Endopolygalacturonase A (pgaA) from Aspergillus flavus (strain ATCC MYA-384 / AF70).